Reading from the N-terminus, the 125-residue chain is MKDVIYVALGGAVGSVLRYWVGIVTIRLFGPFLPWGTFSVNLIGSFCIGLFAEMIARKFDASADLRMLLITGLLGGFTTFSAFMLDTVSLAERGDLLWPAFYVAASIGFGVGAVFAGLAVGRWLF.

The next 4 membrane-spanning stretches (helical) occupy residues 4-24 (VIYVALGGAVGSVLRYWVGIV), 32-52 (FLPWGTFSVNLIGSFCIGLFA), 68-88 (LLITGLLGGFTTFSAFMLDTV), and 100-120 (AFYVAASIGFGVGAVFAGLAV). Residues Gly-75 and Thr-78 each coordinate Na(+).

It belongs to the fluoride channel Fluc/FEX (TC 1.A.43) family.

Its subcellular location is the cell inner membrane. The enzyme catalyses fluoride(in) = fluoride(out). Its activity is regulated as follows. Na(+) is not transported, but it plays an essential structural role and its presence is essential for fluoride channel function. Its function is as follows. Fluoride-specific ion channel. Important for reducing fluoride concentration in the cell, thus reducing its toxicity. In Allorhizobium ampelinum (strain ATCC BAA-846 / DSM 112012 / S4) (Agrobacterium vitis (strain S4)), this protein is Fluoride-specific ion channel FluC.